A 244-amino-acid polypeptide reads, in one-letter code: Small ribosomal subunit protein uS2 (244 aa).

The protein belongs to the universal ribosomal protein uS2 family.

This chain is Small ribosomal subunit protein uS2, found in Endomicrobium trichonymphae.